Reading from the N-terminus, the 448-residue chain is 26S proteasome regulatory subunit 4 homolog (448 aa).

Over residues 1 to 16 the composition is skewed to gly residues; sequence MGQGTPGGMGKQGGAP. 2 disordered regions span residues 1–56 and 93–112; these read MGQG…AAAR and LRPTEDKTEEDRSKVDDLRG. Composition is skewed to basic and acidic residues over residues 17 to 33 and 93 to 111; these read GDRKPGGDGDKKDRKFE and LRPTEDKTEEDRSKVDDLR. 234–241 provides a ligand contact to ATP; it reads GEPGTGKT.

The protein belongs to the AAA ATPase family.

It is found in the cytoplasm. The protein resides in the nucleus. Its function is as follows. The 26S proteasome is involved in the ATP-dependent degradation of ubiquitinated proteins. The regulatory (or ATPase) complex confers ATP dependency and substrate specificity to the 26S complex. The sequence is that of 26S proteasome regulatory subunit 4 homolog (TBP2) from Oryza sativa subsp. japonica (Rice).